The sequence spans 275 residues: Dermonecrotic toxin LamSicTox-alphaIV1ii (275 aa).

His-5 is an active-site residue. Mg(2+) is bound by residues Glu-25 and Asp-27. His-41 (nucleophile) is an active-site residue. 2 disulfides stabilise this stretch: Cys-45-Cys-51 and Cys-47-Cys-192. A Mg(2+)-binding site is contributed by Asp-85.

Belongs to the arthropod phospholipase D family. Class II subfamily. Mg(2+) serves as cofactor. As to expression, expressed by the venom gland.

It localises to the secreted. The catalysed reaction is an N-(acyl)-sphingosylphosphocholine = an N-(acyl)-sphingosyl-1,3-cyclic phosphate + choline. It catalyses the reaction an N-(acyl)-sphingosylphosphoethanolamine = an N-(acyl)-sphingosyl-1,3-cyclic phosphate + ethanolamine. The enzyme catalyses a 1-acyl-sn-glycero-3-phosphocholine = a 1-acyl-sn-glycero-2,3-cyclic phosphate + choline. It carries out the reaction a 1-acyl-sn-glycero-3-phosphoethanolamine = a 1-acyl-sn-glycero-2,3-cyclic phosphate + ethanolamine. Functionally, dermonecrotic toxins cleave the phosphodiester linkage between the phosphate and headgroup of certain phospholipids (sphingolipid and lysolipid substrates), forming an alcohol (often choline) and a cyclic phosphate. This toxin acts on sphingomyelin (SM). It may also act on ceramide phosphoethanolamine (CPE), lysophosphatidylcholine (LPC) and lysophosphatidylethanolamine (LPE), but not on lysophosphatidylserine (LPS), and lysophosphatidylglycerol (LPG). It acts by transphosphatidylation, releasing exclusively cyclic phosphate products as second products. Induces dermonecrosis, hemolysis, increased vascular permeability, edema, inflammatory response, and platelet aggregation. This is Dermonecrotic toxin LamSicTox-alphaIV1ii from Loxosceles amazonica (Recluse spider).